Consider the following 259-residue polypeptide: tRNA (guanine-N(7)-)-methyltransferase (259 aa).

The segment at 1–74 is disordered; it reads MGHHGQMHAQ…PAEDPDRPGP (74 aa). Residues glutamate 91, glutamate 116, asparagine 143, and aspartate 166 each coordinate S-adenosyl-L-methionine. Residue aspartate 166 is part of the active site. Substrate-binding positions include lysine 170, aspartate 202, and 238–241; that span reads TKYE.

This sequence belongs to the class I-like SAM-binding methyltransferase superfamily. TrmB family.

It carries out the reaction guanosine(46) in tRNA + S-adenosyl-L-methionine = N(7)-methylguanosine(46) in tRNA + S-adenosyl-L-homocysteine. The protein operates within tRNA modification; N(7)-methylguanine-tRNA biosynthesis. Catalyzes the formation of N(7)-methylguanine at position 46 (m7G46) in tRNA. This chain is tRNA (guanine-N(7)-)-methyltransferase, found in Mycobacterium avium (strain 104).